A 369-amino-acid polypeptide reads, in one-letter code: Uroporphyrinogen decarboxylase (369 aa).

Residues Arg-28–Arg-32, Asp-78, Tyr-154, Ser-209, and His-339 each bind substrate.

The protein belongs to the uroporphyrinogen decarboxylase family. Homodimer.

Its subcellular location is the cytoplasm. The catalysed reaction is uroporphyrinogen III + 4 H(+) = coproporphyrinogen III + 4 CO2. It participates in porphyrin-containing compound metabolism; protoporphyrin-IX biosynthesis; coproporphyrinogen-III from 5-aminolevulinate: step 4/4. Functionally, catalyzes the decarboxylation of four acetate groups of uroporphyrinogen-III to yield coproporphyrinogen-III. This is Uroporphyrinogen decarboxylase from Polaromonas sp. (strain JS666 / ATCC BAA-500).